Consider the following 529-residue polypeptide: Plexin domain-containing protein 2 (529 aa).

A signal peptide spans 1-30; that stretch reads MARFPKADLAAAGVMLLCHFFTDQFQFADG. The Extracellular segment spans residues 31-454; it reads KPGDQILDWQ…AEKKGGTLHA (424 aa). Positions 80 to 104 are disordered; the sequence is ASVGQDSPEPRSFTDLLLDDGQDNN. N-linked (GlcNAc...) asparagine glycans are attached at residues asparagine 103 and asparagine 160. A PSI domain is found at 327 to 372; the sequence is TCLQFNRCGPCVSSQIGFNCSWCSKLQRCSSGFDRHRQDWVDSGCP. Residues 455–475 traverse the membrane as a helical segment; it reads GLIIGILILVLIVATAILVTV. The Cytoplasmic segment spans residues 476–529; it reads YMYHHPTSAASIFFIERRPSRWPAMKFRRGSGHPAYAEVEPVGEKEGFIVSEQC. Serine 506 is subject to Phosphoserine.

The protein belongs to the plexin family. In terms of assembly, interacts with CTTN. Expressed in the endothelial cells of the stroma but not in the endothelial cells of normal colonic tissue.

It localises to the membrane. Its function is as follows. May play a role in tumor angiogenesis. The polypeptide is Plexin domain-containing protein 2 (PLXDC2) (Homo sapiens (Human)).